The sequence spans 201 residues: MKLFYKPGACSLASHITLRESGKDFTLVSVDLMKKRLENGDDYFAVNPKGQVPALLLDDGTLLTEGVAIMQYLADSVPDRQLLAPVNSISRYKTIEWLNYIATELHKGFTPLFRPDTPEEYKPTVRAQLEKKLQYVNEALKDEHWICGQRFTIADAYLFTVLRWAYAVKLNLEGLEHIAAFMQRMAERPEVQDALSAEGLK.

Positions 1–81 (MKLFYKPGAC…YLADSVPDRQ (81 aa)) constitute a GST N-terminal domain. Glutathione is bound by residues Cys-10, Lys-35, Val-52, 65 to 66 (EG), Asn-99, and 103 to 106 (TELH). The GST C-terminal domain maps to 87–201 (NSISRYKTIE…QDALSAEGLK (115 aa)).

The protein belongs to the GST superfamily. Beta family. As to quaternary structure, homodimer.

Its subcellular location is the cytoplasm. The catalysed reaction is RX + glutathione = an S-substituted glutathione + a halide anion + H(+). Its function is as follows. Conjugation of reduced glutathione to a wide number of exogenous and endogenous hydrophobic electrophiles. The chain is Glutathione S-transferase GstA (gstA) from Escherichia coli O157:H7.